The primary structure comprises 226 residues: LexA repressor (226 aa).

A DNA-binding region (H-T-H motif) is located at residues R28 to R48. Active-site for autocatalytic cleavage activity residues include S133 and K170.

It belongs to the peptidase S24 family. As to quaternary structure, homodimer.

It carries out the reaction Hydrolysis of Ala-|-Gly bond in repressor LexA.. Its function is as follows. Represses a number of genes involved in the response to DNA damage (SOS response), including recA and lexA. In the presence of single-stranded DNA, RecA interacts with LexA causing an autocatalytic cleavage which disrupts the DNA-binding part of LexA, leading to derepression of the SOS regulon and eventually DNA repair. The protein is LexA repressor of Halorhodospira halophila (strain DSM 244 / SL1) (Ectothiorhodospira halophila (strain DSM 244 / SL1)).